Here is a 456-residue protein sequence, read N- to C-terminus: Signal transduction histidine-protein kinase ArlS (456 aa).

2 helical membrane-spanning segments follow: residues 13-33 and 157-177; these read LITTLITFTTILLFCLIIIFF and IVALAFGLIATIITAGVSYIF. An HAMP domain is found at 179 to 232; sequence SQITKPIVTMSNKMNQIRRDGFQNKLELTTNYEETDNLIDTFNEMMYQIEESFN. The 217-residue stretch at 240–456 folds into the Histidine kinase domain; the sequence is DASHELRTPL…TFKISFPVLN (217 aa). His243 carries the post-translational modification Phosphohistidine; by autocatalysis.

Post-translationally, autophosphorylated.

The protein localises to the cell membrane. The enzyme catalyses ATP + protein L-histidine = ADP + protein N-phospho-L-histidine.. Member of the two-component regulatory system ArlS/ArlR. ArlS probably functions as a sensor protein kinase which is autophosphorylated at a histidine residue and transfers its phosphate group to ArlR. In Staphylococcus epidermidis (strain ATCC 35984 / DSM 28319 / BCRC 17069 / CCUG 31568 / BM 3577 / RP62A), this protein is Signal transduction histidine-protein kinase ArlS (arlS).